Here is a 461-residue protein sequence, read N- to C-terminus: Homocitrate synthase (461 aa).

The 256-residue stretch at 4 to 259 folds into the Pyruvate carboxyltransferase domain; it reads VGILDSTLRE…IEVVKLDKLQ (256 aa). Arginine 12 lines the 2-oxoglutarate pocket. Glutamate 13 contributes to the Mg(2+) binding site. 3 residues coordinate 2-oxoglutarate: histidine 76, arginine 136, and threonine 170. Residues histidine 198 and histidine 200 each contribute to the Mg(2+) site. The active-site Proton acceptor is histidine 292.

This sequence belongs to the alpha-IPM synthase/homocitrate synthase family. Homocitrate synthase LYS20/LYS21 subfamily. The cofactor is Mg(2+). Mn(2+) serves as cofactor.

It catalyses the reaction acetyl-CoA + 2-oxoglutarate + H2O = (2R)-homocitrate + CoA + H(+). It participates in amino-acid biosynthesis; L-lysine biosynthesis via AAA pathway; L-alpha-aminoadipate from 2-oxoglutarate: step 1/5. Functionally, catalyzes the aldol-type condensation of 2-oxoglutarate with acetyl-CoA to yield homocitrate. Carries out the first step of the alpha-aminoadipate (AAA) lysine biosynthesis pathway. The protein is Homocitrate synthase of Saccharolobus islandicus (strain Y.N.15.51 / Yellowstone #2) (Sulfolobus islandicus).